The primary structure comprises 449 residues: uncharacterized protein (449 aa).

The TRAM domain maps to 3–61 (VWQQGATIELRIDSLSHTGEGVGRWQDRVVFVADTVPGDRLRVRLTHVKRQYAHGKVLE). [4Fe-4S] cluster contacts are provided by C74, C80, C83, and C161. Residues Q283, Y312, E333, and D378 each contribute to the S-adenosyl-L-methionine site. Catalysis depends on C405, which acts as the Nucleophile.

This sequence belongs to the class I-like SAM-binding methyltransferase superfamily. RNA M5U methyltransferase family.

This is an uncharacterized protein from Thermosynechococcus vestitus (strain NIES-2133 / IAM M-273 / BP-1).